A 316-amino-acid polypeptide reads, in one-letter code: MSIKEQTLMTPYLQFDRNQWAALRDSVPMTLSEDEIARLKGINEDLSLEEVAEIYLPLSRLLNFYISSNLRRQAVLEQFLGTNGQRIPYIISIAGSVAVGKSTTARVLQALLSRWPEHRRVELITTDGFLHPNQVLKERGLMKKKGFPESYDMHRLVKFVSDLKSGVPNVTAPVYSHLIYDVIPDGDKTVVQPDILILEGLNVLQSGMDYPHDPHHVFVSDFVDFSIYVDAPEDLLQTWYINRFLKFREGAFTDPDSYFHNYAKLTKEEAIKTAMTLWKEINWLNLKQNILPTRGRASLILTKSANHAVEEVRLRK.

G95–S102 is a binding site for ATP.

Belongs to the prokaryotic pantothenate kinase family.

The protein resides in the cytoplasm. The catalysed reaction is (R)-pantothenate + ATP = (R)-4'-phosphopantothenate + ADP + H(+). The protein operates within cofactor biosynthesis; coenzyme A biosynthesis; CoA from (R)-pantothenate: step 1/5. This chain is Pantothenate kinase, found in Shigella dysenteriae serotype 1 (strain Sd197).